Reading from the N-terminus, the 370-residue chain is Notoamide biosynthesis cluster protein J (370 aa).

A signal peptide spans Met1–Ala22. N-linked (GlcNAc...) asparagine glycosylation is found at Asn159, Asn167, Asn192, Asn235, Asn282, Asn340, and Asn346.

Functionally, part of the gene cluster that mediates the biosynthesis of notoamide, a fungal indole alkaloid that belongs to a family of natural products containing a characteristic bicyclo[2.2.2]diazaoctane core. The first step of notoamide biosynthesis involves coupling of L-proline and L-tryptophan by the bimodular NRPS notE, to produce cyclo-L-tryptophan-L-proline called brevianamide F. The reverse prenyltransferase notF then acts as a deoxybrevianamide E synthase and converts brevianamide F to deoxybrevianamide E via reverse prenylation at C-2 of the indole ring leading to the bicyclo[2.2.2]diazaoctane core. Deoxybrevianamide E is further hydroxylated at C-6 of the indole ring, likely catalyzed by the cytochrome P450 monooxygenase notG, to yield 6-hydroxy-deoxybrevianamide E. 6-hydroxy-deoxybrevianamide E is a specific substrate of the prenyltransferase notC for normal prenylation at C-7 to produce 6-hydroxy-7-prenyl-deoxybrevianamide, also called notoamide S. As the proposed pivotal branching point in notoamide biosynthesis, notoamide S can be diverted to notoamide E through an oxidative pyran ring closure putatively catalyzed by either notH cytochrome P450 monooxygenase or the notD FAD-linked oxidoreductase. This step would be followed by an indole 2,3-epoxidation-initiated pinacol-like rearrangement catalyzed by the notB FAD-dependent monooxygenase leading to the formation of notoamide C and notoamide D. On the other hand notoamide S is converted to notoamide T by notH (or notD), a bifunctional oxidase that also functions as the intramolecular Diels-Alderase responsible for generation of (+)-notoamide T. To generate antipodal (-)-notoaminide T, notH' (or notD') in Aspergillus versicolor is expected to catalyze a Diels-Alder reaction leading to the opposite stereochemistry. The remaining oxidoreductase notD (or notH) likely catalyzes the oxidative pyran ring formation to yield (+)-stephacidin A. The FAD-dependent monooxygenase notI is highly similar to notB and is predicted to catalyze a similar conversion from (+)-stephacidin A to (-)-notoamide B via the 2,3-epoxidation of (+)-stephacidin A followed by a pinacol-type rearrangement. Finally, it remains unclear which enzyme could be responsible for the final hydroxylation steps leading to notoamide A and sclerotiamide. The function of notJ in the notoamide biosynthesis has not been determined yet. This Aspergillus sp. (strain MF297-2) protein is Notoamide biosynthesis cluster protein J.